A 113-amino-acid polypeptide reads, in one-letter code: Cell cycle protein GpsB (113 aa).

Residues 37–63 (KDYETYATLVKSLRQEIADLKEELTRK) are a coiled coil. Positions 61 to 82 (TRKPQVSSAPSPSHPDPIDVAA) are disordered.

Belongs to the GpsB family. In terms of assembly, forms polymers through the coiled coil domains. Interacts with PBP1, MreC and EzrA.

It is found in the cytoplasm. Its function is as follows. Divisome component that associates with the complex late in its assembly, after the Z-ring is formed, and is dependent on DivIC and PBP2B for its recruitment to the divisome. Together with EzrA, is a key component of the system that regulates PBP1 localization during cell cycle progression. Its main role could be the removal of PBP1 from the cell pole after pole maturation is completed. Also contributes to the recruitment of PBP1 to the division complex. Not essential for septum formation. The polypeptide is Cell cycle protein GpsB (Streptococcus pneumoniae (strain ATCC 700669 / Spain 23F-1)).